We begin with the raw amino-acid sequence, 497 residues long: Probable cytosol aminopeptidase (497 aa).

Mn(2+) contacts are provided by lysine 263 and aspartate 268. Lysine 275 is an active-site residue. Positions 286, 345, and 347 each coordinate Mn(2+). Arginine 349 is an active-site residue.

This sequence belongs to the peptidase M17 family. Mn(2+) is required as a cofactor.

It is found in the cytoplasm. The catalysed reaction is Release of an N-terminal amino acid, Xaa-|-Yaa-, in which Xaa is preferably Leu, but may be other amino acids including Pro although not Arg or Lys, and Yaa may be Pro. Amino acid amides and methyl esters are also readily hydrolyzed, but rates on arylamides are exceedingly low.. It carries out the reaction Release of an N-terminal amino acid, preferentially leucine, but not glutamic or aspartic acids.. Presumably involved in the processing and regular turnover of intracellular proteins. Catalyzes the removal of unsubstituted N-terminal amino acids from various peptides. The polypeptide is Probable cytosol aminopeptidase (Sinorhizobium medicae (strain WSM419) (Ensifer medicae)).